A 309-amino-acid chain; its full sequence is Probable copper-dependent oxygenase clz3 (309 aa).

N-linked (GlcNAc...) asparagine glycans are attached at residues N9 and N249. The chain crosses the membrane as a helical span at residues 257–277; the sequence is FAVPLAAIAFIALIISGGYVI.

The protein belongs to the clz3 oxygenase family.

It localises to the membrane. Its pathway is secondary metabolite biosynthesis. In terms of biological role, probable copper-dependent oxygenase; part of the gene cluster that mediates the biosynthesis of squalestatin S1 (SQS1, also known as zaragozic acid A), a heavily oxidized fungal polyketide that offers potent cholesterol lowering activity by targeting squalene synthase (SS). SQS1 is composed of a 2,8-dioxobicyclic[3.2.1]octane-3,4,5-tricarboxyclic acid core that is connected to two lipophilic polyketide arms. These initial steps feature the priming of an unusual benzoic acid starter unit onto the highly reducing polyketide synthase clz14, followed by oxaloacetate extension and product release to generate a tricarboxylic acid containing product. The phenylalanine ammonia lyase (PAL) clz10 and the acyl-CoA ligase clz12 are involved in transforming phenylalanine into benzoyl-CoA. The citrate synthase-like protein clz17 is involved in connecting the C-alpha-carbons of the hexaketide chain and oxaloacetate to afford the tricarboxylic acid unit. The potential hydrolytic enzymes, clz11 and clz13, are in close proximity to pks2 and may participate in product release. On the other side, the tetraketide arm is synthesized by a the squalestatin tetraketide synthase clz2 and enzymatically esterified to the core in the last biosynthetic step, by the acetyltransferase clz6. The biosynthesis of the tetraketide must involve 3 rounds of chain extension. After the first and second rounds methyl-transfer occurs, and in all rounds of extension the ketoreductase and dehydratase are active. The enoyl reductase and C-MeT of clz2 are not active in the final round of extension. The acetyltransferase clz6 appears to have a broad substrate selectivity for its acyl CoA substrate, allowing the in vitro synthesis of novel squalestatins. The biosynthesis of SQS1 requires several oxidative steps likely performed by oxidoreductases clz3, clz15 and clz16. Finally, in support of the identification of the cluster as being responsible for SQS1 production, the cluster contains a gene encoding a putative squalene synthase (SS) clz20, suggesting a likely mechanism for self-resistance. The polypeptide is Probable copper-dependent oxygenase clz3 (Cochliobolus lunatus (Filamentous fungus)).